We begin with the raw amino-acid sequence, 588 residues long: CD166 antigen (588 aa).

A signal peptide spans 1–33 (MMEPPAAAARASCRRRPLLCLLLAALCMPPALG). Ig-like V-type domains are found at residues 34-126 (LYTV…TEDD) and 131-240 (PTVV…KTIQ). The Extracellular portion of the chain corresponds to 34–532 (LYTVNAVYGD…NSEKVNDQAK (499 aa)). Cystine bridges form between Cys49–Cys119 and Cys163–Cys226. Asn101, Asn173, Asn199, Asn271, Asn312, Asn366, Asn462, Asn485, and Asn504 each carry an N-linked (GlcNAc...) asparagine glycan. 3 Ig-like C2-type domains span residues 251–333 (PTEK…TTIT), 338–414 (DLQL…KTLK), and 421–501 (PQIK…RTVT). Intrachain disulfides connect Cys276-Cys319, Cys359-Cys397, and Cys440-Cys490. Residues 533-553 (LIVGIVVGLLLVALVAGVVYW) traverse the membrane as a helical segment. Residues 554–588 (LYVKKSKTASKHVDKDLGNIEENKKLEENNHKSET) are Cytoplasmic-facing.

Homodimer. Interacts (via extracellular domain) with CD6 (via extracellular domain). Homodimerization and interaction with CD6 involve the same region and cannot occur simultaneously. The affinity for CD6 is much higher than the affinity for self-association. Glycosylated. As to expression, detected in embryo. Detected in embryonic spinal cord and embryonic brain. Within the spinal cord it is localized to axons in the dorsal funiculus, midline floor plate cells, and motoneurons. Detected in embryonic epithelia and brain. After hatching, detected in bursa of Fabricius and thymus. Detected on embryonic retinal ganglion cell axon growth cones (at protein level). Detected in embryonic retina and in the optic fiber layer, which is composed of retinal ganglion cell axons and their growth cones.

The protein localises to the cell membrane. It is found in the cell projection. Its subcellular location is the axon. The protein resides in the dendrite. In terms of biological role, cell adhesion molecule that mediates both heterotypic cell-cell contacts via its interaction with CD6, as well as homotypic cell-cell contacts. Promotes T-cell activation and proliferation via its interactions with CD6. Contributes to the formation and maturation of the immunological synapse via its interactions with CD6. Mediates homotypic interactions with cells that express ALCAM. Mediates attachment of dendritic cells onto endothelial cells via homotypic interaction. Inhibits endothelial cell migration and promotes endothelial tube formation via homotypic interactions. Required for normal organization of the lymph vessel network. Required for normal hematopoietic stem cell engraftment in the bone marrow. Plays a role in hematopoiesis; required for normal numbers of hematopoietic stem cells in bone marrow. Promotes in vitro osteoblast proliferation and differentiation. Promotes neurite extension, axon growth and axon guidance; axons grow preferentially on surfaces that contain ALCAM. Mediates outgrowth and pathfinding for retinal ganglion cell axons. The chain is CD166 antigen (ALCAM) from Gallus gallus (Chicken).